A 501-amino-acid polypeptide reads, in one-letter code: MLPKVETEALGLARSNGEQGQMPENMQVSQFKMVNYSYDEDLEELCPVCGDKVSGYHYGLLTCESCKGFFKRTVQNNKRYTCIENQNCQIDKTQRKRCPYCRFQKCLSVGMKLEAVRADRMRGGRNKFGPMYKRDRALKQQKKALIRANGLKLEAMTQVIQAMPTDLTISSAIQNIHSASKGLPLNHTALPPTDYDRSPFVTSPISMTMPPHGSLQGYQTYGHFPSRAIKSEYPDPYTSSPESIMGYSYMDGYQTSSPASIPHLILELQKCEPDEPQVQAKIMAYLQQEQANRSKHEKLNTFGLMCKMADQTLFSIVEWARSSIFFRELKVDDQMKLLQNCWSELLILDHIYRQVVHVKEGSILLVTGQQVDYSVIASQAGATLNNLMSHAQELVAKLRSLQFDLREFVCLKFLVLFSLDVKNLENFQLVEGVQEQVNAALLDYTMCNYPQQTDKFGQLLLRLPEIRAISMQAEEYLYCKHLNGDVPCNNLLIEMLHAKRA.

A DNA-binding region (nuclear receptor) is located at residues glutamate 43 to glutamate 114. The Zn(2+) site is built by cysteine 46, cysteine 49, cysteine 63, cysteine 66, cysteine 82, cysteine 88, cysteine 98, and cysteine 101. 2 NR C4-type zinc fingers span residues cysteine 46 to cysteine 66 and cysteine 82 to cysteine 106. A C-terminal extension (CTE) region spans residues lysine 112 to lysine 127. The short motif at phenylalanine 128–arginine 147 is the FTZ-F1 box element. The interval asparagine 186 to methionine 207 is disordered. Residues serine 260–lysine 499 form the NR LBD domain. A phospholipid derivative is bound by residues glycine 381–leucine 384, tyrosine 476, and lysine 480. The segment at cysteine 488 to lysine 499 is AF-2.

This sequence belongs to the nuclear hormone receptor family. NR5 subfamily. As to quaternary structure, monomer; Binds DNA as a monomer. Detected in liver and adrenal gland.

The protein localises to the nucleus. Its subcellular location is the chromosome. Orphan nuclear receptor that binds DNA as a monomer to the 5'-TCAAGGCCA-3' sequence and controls expression of target genes: regulates key biological processes, such as cholesterol and bile acid synthesis pathways, as well as cartilage, liver and pancreas morphogenesis. Ligand-binding causes conformational change which causes recruitment of coactivators, promoting target gene activation. The specific ligand is unknown, but specific phospholipids, such as phosphatidylethanolamine, phosphatidylserine, dilauroyl phosphatidylcholine and diundecanoyl phosphatidylcholine can act as ligand in vitro. Acts as a pioneer transcription factor, which unwraps target DNA from histones and elicits local opening of closed chromatin. Involved in the formation of connective tissue in lower jaw. The protein is Nuclear receptor subfamily 5 group A member 2 of Gallus gallus (Chicken).